The sequence spans 104 residues: Ribonuclease P protein component 4 (104 aa).

Zn(2+) is bound by residues Cys57, Cys60, Cys83, and Cys86.

Belongs to the eukaryotic/archaeal RNase P protein component 4 family. As to quaternary structure, consists of a catalytic RNA component and at least 4-5 protein subunits. Requires Zn(2+) as cofactor.

The protein localises to the cytoplasm. The enzyme catalyses Endonucleolytic cleavage of RNA, removing 5'-extranucleotides from tRNA precursor.. Part of ribonuclease P, a protein complex that generates mature tRNA molecules by cleaving their 5'-ends. In Saccharolobus islandicus (strain M.14.25 / Kamchatka #1) (Sulfolobus islandicus), this protein is Ribonuclease P protein component 4.